A 1347-amino-acid polypeptide reads, in one-letter code: Probable serine/threonine-protein kinase DDB_G0288147 (1347 aa).

A Phorbol-ester/DAG-type zinc finger spans residues 12–67; it reads NHRFEPYTLKHLTICKRCEKEIIGVSNSAQICYSCKNIYHTRCCKEIETKKLELIC. 3 disordered regions span residues 262-316, 333-402, and 463-485; these read PFNE…LNES, SNNS…KSSK, and DNNN…NNNN. A compositionally biased stretch (polar residues) spans 271–282; sequence DSTLSASTYNRR. 3 stretches are compositionally biased toward low complexity: residues 286–316, 333–342, and 350–361; these read KNKN…LNES, SNNSNNLAAL, and TTTTTTTTTTTT. 2 stretches are compositionally biased toward basic residues: residues 366–382 and 389–402; these read NNHH…KSRK and NKKK…KSSK. The span at 464–485 shows a compositional bias: low complexity; that stretch reads NNNNNNNNNNNNNNNSNNNNNN. The region spanning 599-854 is the Protein kinase domain; sequence VKINVEIYDS…EILKVFYSLL (256 aa). ATP-binding positions include 605–613 and lysine 626; that span reads IYDSPLCTV. Catalysis depends on aspartate 724, which acts as the Proton acceptor. Disordered stretches follow at residues 937-1241 and 1282-1310; these read SERK…IVNP and SSDS…IRSP. Residues 976–986 are compositionally biased toward acidic residues; it reads IIDDDDDDDDD. 2 stretches are compositionally biased toward low complexity: residues 1004 to 1015 and 1024 to 1062; these read NINSENKNNNNV and SSNS…NNNN. 2 stretches are compositionally biased toward polar residues: residues 1063–1083 and 1118–1127; these read LRQN…NQLM and LSSSQTSEIG. Composition is skewed to low complexity over residues 1128–1241 and 1282–1291; these read DNNT…IVNP and SSDSSNSLSD.

It belongs to the protein kinase superfamily. TKL Ser/Thr protein kinase family.

The enzyme catalyses L-seryl-[protein] + ATP = O-phospho-L-seryl-[protein] + ADP + H(+). It carries out the reaction L-threonyl-[protein] + ATP = O-phospho-L-threonyl-[protein] + ADP + H(+). This chain is Probable serine/threonine-protein kinase DDB_G0288147, found in Dictyostelium discoideum (Social amoeba).